Reading from the N-terminus, the 886-residue chain is Alanine--tRNA ligase (886 aa).

4 residues coordinate Zn(2+): His564, His568, Cys666, and His670.

This sequence belongs to the class-II aminoacyl-tRNA synthetase family. The cofactor is Zn(2+).

The protein resides in the cytoplasm. It catalyses the reaction tRNA(Ala) + L-alanine + ATP = L-alanyl-tRNA(Ala) + AMP + diphosphate. Its function is as follows. Catalyzes the attachment of alanine to tRNA(Ala) in a two-step reaction: alanine is first activated by ATP to form Ala-AMP and then transferred to the acceptor end of tRNA(Ala). Also edits incorrectly charged Ser-tRNA(Ala) and Gly-tRNA(Ala) via its editing domain. The protein is Alanine--tRNA ligase of Prochlorococcus marinus (strain MIT 9312).